Consider the following 126-residue polypeptide: MQLSLLKAKIHRATVSHSELNYEGSIAIDGLLLEAAGLYEFEKVHIWNVTNGARFTTYAIRAEHGSGIISVNGGAARYVQVGDLVIVAAFAQMSEDEAAVFSPNLVYVDAANAMTHTNHSIPTQVA.

Ser25 serves as the catalytic Schiff-base intermediate with substrate; via pyruvic acid. At Ser25 the chain carries Pyruvic acid (Ser). Position 57 (Thr57) interacts with substrate. The active-site Proton donor is Tyr58. 73–75 is a binding site for substrate; sequence GGA.

Belongs to the PanD family. As to quaternary structure, heterooctamer of four alpha and four beta subunits. The cofactor is pyruvate. Post-translationally, is synthesized initially as an inactive proenzyme, which is activated by self-cleavage at a specific serine bond to produce a beta-subunit with a hydroxyl group at its C-terminus and an alpha-subunit with a pyruvoyl group at its N-terminus.

It localises to the cytoplasm. The catalysed reaction is L-aspartate + H(+) = beta-alanine + CO2. It functions in the pathway cofactor biosynthesis; (R)-pantothenate biosynthesis; beta-alanine from L-aspartate: step 1/1. Functionally, catalyzes the pyruvoyl-dependent decarboxylation of aspartate to produce beta-alanine. The chain is Aspartate 1-decarboxylase from Xylella fastidiosa (strain 9a5c).